The chain runs to 311 residues: Putative dihydroorotate dehydrogenase A (fumarate) (311 aa).

Substrate-binding positions include Lys45, 69–73 (NSMGL), and Asn128. Residue 45-46 (KT) coordinates FMN. Asn128 contacts FMN. Cys131 functions as the Nucleophile in the catalytic mechanism. Residues Lys165 and Val193 each coordinate FMN. 194-195 (NS) is a substrate binding site. FMN is bound by residues Gly220, 248 to 249 (GG), and 270 to 271 (GT).

It belongs to the dihydroorotate dehydrogenase family. Type 1 subfamily. In terms of assembly, homodimer. Requires FMN as cofactor.

The protein localises to the cytoplasm. The catalysed reaction is (S)-dihydroorotate + fumarate = orotate + succinate. It functions in the pathway pyrimidine metabolism; UMP biosynthesis via de novo pathway. Functionally, catalyzes the conversion of dihydroorotate to orotate with fumarate as the electron acceptor. The sequence is that of Putative dihydroorotate dehydrogenase A (fumarate) (pyrD) from Streptococcus uberis (strain ATCC BAA-854 / 0140J).